The chain runs to 705 residues: 3-hydroxypropionate--CoA ligase [ADP-forming] (705 aa).

An ATP-grasp domain is found at 25–61 (KSILKNYGVKVPPYALVTSAEEAAKEAKKIGFPLVMK). 51–61 (AKKIGFPLVMK) is a binding site for ATP.

The protein in the N-terminal section; belongs to the acetate CoA ligase beta subunit family. This sequence in the C-terminal section; belongs to the acetate CoA ligase alpha subunit family. Mg(2+) serves as cofactor. The cofactor is Mn(2+).

It catalyses the reaction 3-hydroxypropanoate + ATP + CoA = 3-hydroxypropanoyl-CoA + ADP + phosphate. Its function is as follows. Involved in thaumarchaeal hydroxypropionate/hydroxybutyrate (HP/HB) cycle, a modified version of the autotrophic HP/HB cycle of Crenarchaeota. Catalyzes the formation of 3-hydroxypropionyl-CoA, ADP and phosphate from 3-hydroxypropionate, coenzyme A (CoA) and ATP. Can also use 4-hydroxybutyrate, propionate and butyrate, with poor catalytic efficiency. In Nitrosopumilus maritimus (strain SCM1), this protein is 3-hydroxypropionate--CoA ligase [ADP-forming].